The following is a 79-amino-acid chain: DNA-directed RNA polymerase subunit omega (79 aa).

The protein belongs to the RNA polymerase subunit omega family. The RNAP catalytic core consists of 2 alpha, 1 beta, 1 beta' and 1 omega subunit. When a sigma factor is associated with the core the holoenzyme is formed, which can initiate transcription.

The catalysed reaction is RNA(n) + a ribonucleoside 5'-triphosphate = RNA(n+1) + diphosphate. Functionally, promotes RNA polymerase assembly. Latches the N- and C-terminal regions of the beta' subunit thereby facilitating its interaction with the beta and alpha subunits. The chain is DNA-directed RNA polymerase subunit omega from Thermotoga neapolitana (strain ATCC 49049 / DSM 4359 / NBRC 107923 / NS-E).